We begin with the raw amino-acid sequence, 403 residues long: UPF0284 protein PMT_1350 (403 aa).

Belongs to the UPF0284 family.

This is UPF0284 protein PMT_1350 from Prochlorococcus marinus (strain MIT 9313).